The primary structure comprises 816 residues: uncharacterized protein (816 aa).

Disordered regions lie at residues 1–34, 65–101, 154–406, and 770–816; these read MLFN…QQES, RQNN…GYKN, DEKD…ENPE, and RQHK…VMYA. Positions 18–32 are enriched in low complexity; the sequence is NQSSANTQNQQAHQQ. The span at 83 to 92 shows a compositional bias: polar residues; sequence VSATSAYSKQ. Residues 161-223 show a composition bias toward low complexity; sequence TTTSSSTSTS…STSTTSTSTT (63 aa). Residues 246–260 show a composition bias toward polar residues; sequence ESTSIGKGTADSAQI. Position 286 is a phosphoserine (S286). The span at 292 to 316 shows a compositional bias: basic and acidic residues; sequence DEQKEEKSDVKKVNPPSGEEKKEVE. A compositionally biased stretch (acidic residues) spans 317–326; the sequence is AEGDAEEETE. Residues 327 to 342 are compositionally biased toward low complexity; sequence QSSAEESAERTSTPET. Phosphoserine is present on residues S343 and S347. A compositionally biased stretch (acidic residues) spans 343–353; it reads SEPESEEDESP. Residues 380–396 are compositionally biased toward low complexity; the sequence is KSPTSSSTQKSKTAAPS. Basic and acidic residues-rich tracts occupy residues 770-792 and 799-816; these read RQHK…DRSQ and PKDD…VMYA. T809 is subject to Phosphothreonine.

Pyrophosphorylated by 5-diphosphoinositol pentakisphosphate (5-IP7). Serine pyrophosphorylation is achieved by Mg(2+)-dependent, but enzyme independent transfer of a beta-phosphate from a inositol pyrophosphate to a pre-phosphorylated serine residue.

This is an uncharacterized protein from Saccharomyces cerevisiae (strain ATCC 204508 / S288c) (Baker's yeast).